Consider the following 117-residue polypeptide: Large ribosomal subunit protein bL19 (117 aa).

Belongs to the bacterial ribosomal protein bL19 family.

In terms of biological role, this protein is located at the 30S-50S ribosomal subunit interface and may play a role in the structure and function of the aminoacyl-tRNA binding site. This chain is Large ribosomal subunit protein bL19, found in Aliivibrio fischeri (strain ATCC 700601 / ES114) (Vibrio fischeri).